Reading from the N-terminus, the 525-residue chain is GMP synthase [glutamine-hydrolyzing] (525 aa).

Positions 9-207 constitute a Glutamine amidotransferase type-1 domain; sequence RILILDFGSQ…VLDICQCEKL (199 aa). Residue Cys86 is the Nucleophile of the active site. Active-site residues include His181 and Glu183. In terms of domain architecture, GMPS ATP-PPase spans 208 to 400; the sequence is WTPDAIIEDA…LGLPYDMLYR (193 aa). 235–241 contacts ATP; sequence SGGVDSS.

As to quaternary structure, homodimer.

The enzyme catalyses XMP + L-glutamine + ATP + H2O = GMP + L-glutamate + AMP + diphosphate + 2 H(+). The protein operates within purine metabolism; GMP biosynthesis; GMP from XMP (L-Gln route): step 1/1. Functionally, catalyzes the synthesis of GMP from XMP. The polypeptide is GMP synthase [glutamine-hydrolyzing] (Pseudoalteromonas atlantica (strain T6c / ATCC BAA-1087)).